The following is a 1399-amino-acid chain: Stress response protein NST1 (1399 aa).

Residues 28-52 (SANTQGNSHQIPRKQSQSTNSNHQE) show a composition bias toward polar residues. Disordered regions lie at residues 28-105 (SANT…VIKQ), 119-155 (EDEN…NEST), 202-249 (TRHH…NNGN), 318-353 (QQKY…QDQN), 546-574 (TVIS…VDDD), 589-681 (NPHH…EEEK), 722-894 (EAEE…VNDD), 949-990 (AKLM…SSFQ), 1134-1178 (SGNQ…NNNN), and 1373-1399 (PPIG…RLWN). Low complexity predominate over residues 53-69 (QSQQARNQSSQSNTNTT). Over residues 70-82 (SRKKRKKHKKKSK) the composition is skewed to basic residues. Residues 140-154 (SSKSNTRKNSSVNES) show a composition bias toward polar residues. A compositionally biased stretch (low complexity) spans 207–249 (QQQLSSSVSSQPQQQQSQQNVSTSSNNGSSSGINNNSNNNNGN). A compositionally biased stretch (polar residues) spans 331–340 (STSVSPQPES). A compositionally biased stretch (basic and acidic residues) spans 341–353 (QDNKQLKKSQDQN). Over residues 547–566 (VISQNPQEQKSVSIGQSDQS) the composition is skewed to polar residues. Basic residues predominate over residues 591-618 (HHHHHHHQHSNKQHDHHHCHNHRHRHRR). Residues 622 to 678 (ELDDEHDQENEDEELEDDEEDYYDEYDDDEEEDEEEDEDDDDIEEEGASDTESEISE) are compositionally biased toward acidic residues. Residues 708–896 (KLSQDRTQKL…TKLMVNDDDE (189 aa)) are a coiled coil. Composition is skewed to basic and acidic residues over residues 722 to 743 (EAEE…EKAK) and 752 to 888 (AKEE…ERTK). Residues 1134–1156 (SGNQSGISAPTTTSTNTSSRNNS) are compositionally biased toward low complexity. Polar residues-rich tracts occupy residues 1157–1172 (IWGN…PSLL) and 1377–1390 (ESST…NVGN).

This sequence belongs to the NST1 family.

Its subcellular location is the cytoplasm. In terms of biological role, may act as a negative regulator of salt tolerance. The chain is Stress response protein NST1 (NST1) from Candida albicans (strain SC5314 / ATCC MYA-2876) (Yeast).